The primary structure comprises 142 residues: Ribosome-binding factor A (142 aa).

Residues 123-142 (VQRDLDSAPEDDEPETGTGH) are disordered. Positions 129–142 (SAPEDDEPETGTGH) are enriched in acidic residues.

Belongs to the RbfA family. In terms of assembly, monomer. Binds 30S ribosomal subunits, but not 50S ribosomal subunits or 70S ribosomes.

It localises to the cytoplasm. One of several proteins that assist in the late maturation steps of the functional core of the 30S ribosomal subunit. Associates with free 30S ribosomal subunits (but not with 30S subunits that are part of 70S ribosomes or polysomes). Required for efficient processing of 16S rRNA. May interact with the 5'-terminal helix region of 16S rRNA. This Methylobacterium radiotolerans (strain ATCC 27329 / DSM 1819 / JCM 2831 / NBRC 15690 / NCIMB 10815 / 0-1) protein is Ribosome-binding factor A.